A 253-amino-acid chain; its full sequence is uncharacterized protein (253 aa).

The residue at position 2 (Ala2) is an N-acetylalanine.

It belongs to the NAD(P)-dependent epimerase/dehydratase family. As to quaternary structure, homodimer.

This is an uncharacterized protein from Arabidopsis thaliana (Mouse-ear cress).